The sequence spans 380 residues: Oocyte-specific homeobox protein 4 (380 aa).

5 disordered regions span residues 1-25 (MSKD…SFLV), 43-95 (VTPT…RKCR), 152-182 (KSSQ…FAAS), 234-303 (PRQK…CQTP), and 339-380 (TRSK…SSAY). Over residues 43–53 (VTPTRPLQSSH) the composition is skewed to polar residues. Basic and acidic residues predominate over residues 54–67 (SVHERDLHQKDSQE). The segment at residues 94 to 153 (CRKERTVYSKEQKCLLQEHFHQCQNPDLEQRKALALLIGVTEYKIQTWFKNRRAKECRKS) is a DNA-binding region (homeobox). Residues 234–250 (PRQKCRELSREPGHLSS) show a composition bias toward basic and acidic residues. Over residues 260–271 (SSPSPAAGAESS) the composition is skewed to low complexity. 2 stretches are compositionally biased toward polar residues: residues 278 to 302 (LSLS…MCQT) and 351 to 380 (NTVQ…SSAY).

It belongs to the paired homeobox family. Obox subfamily. In terms of tissue distribution, specifically expressed in early embryos.

The protein resides in the nucleus. Functionally, transcription factor required for zygotic genome activation (ZGA), a critical event in early embryonic development during which the developmental control passes from maternally provided mRNAs to the expression of the zygotic genome after fertilization. Cannot compensate for loss of other members of the Obox family, suggesting that its function differs from other Obox family members. May regulate expression of histone genes in embryonic stem cells. Also involved in completion of meiosis of oocytes during the meiosis-I/meiosis-II transition. Required to maintain the nuclear membrane of the germinal vesicle in oocytes. In Mus musculus (Mouse), this protein is Oocyte-specific homeobox protein 4.